Reading from the N-terminus, the 481-residue chain is Proline--tRNA ligase (481 aa).

Belongs to the class-II aminoacyl-tRNA synthetase family. ProS type 3 subfamily. Homodimer.

It localises to the cytoplasm. The catalysed reaction is tRNA(Pro) + L-proline + ATP = L-prolyl-tRNA(Pro) + AMP + diphosphate. Its function is as follows. Catalyzes the attachment of proline to tRNA(Pro) in a two-step reaction: proline is first activated by ATP to form Pro-AMP and then transferred to the acceptor end of tRNA(Pro). This chain is Proline--tRNA ligase, found in Chlorobium phaeobacteroides (strain BS1).